Reading from the N-terminus, the 229-residue chain is Urease accessory protein UreG (229 aa).

Over residues 1-15 (MPPHFIDGEPHDHQH) the composition is skewed to basic and acidic residues. Residues 1-20 (MPPHFIDGEPHDHQHDRPRR) form a disordered region. 34 to 41 (GPVGSGKT) contributes to the GTP binding site.

It belongs to the SIMIBI class G3E GTPase family. UreG subfamily. Homodimer. UreD, UreF and UreG form a complex that acts as a GTP-hydrolysis-dependent molecular chaperone, activating the urease apoprotein by helping to assemble the nickel containing metallocenter of UreC. The UreE protein probably delivers the nickel.

Its subcellular location is the cytoplasm. Its function is as follows. Facilitates the functional incorporation of the urease nickel metallocenter. This process requires GTP hydrolysis, probably effectuated by UreG. The protein is Urease accessory protein UreG of Rhodococcus jostii (strain RHA1).